We begin with the raw amino-acid sequence, 100 residues long: Cell division protein FtsB (100 aa).

Residues 1–3 (MKW) are Cytoplasmic-facing. The chain crosses the membrane as a helical span at residues 4–21 (LAIILVVALLALQYRLWM). Residues 22–100 (GEGSIASVVS…TDKDTKKNKK (79 aa)) lie on the Periplasmic side of the membrane. The stretch at 26–73 (IASVVSLNREIAKQKEENARLRERNRLLAAEVDALKQGKDAIEERARN) forms a coiled coil.

The protein belongs to the FtsB family. In terms of assembly, part of a complex composed of FtsB, FtsL and FtsQ.

It localises to the cell inner membrane. Functionally, essential cell division protein. May link together the upstream cell division proteins, which are predominantly cytoplasmic, with the downstream cell division proteins, which are predominantly periplasmic. The chain is Cell division protein FtsB from Saccharophagus degradans (strain 2-40 / ATCC 43961 / DSM 17024).